The sequence spans 601 residues: uncharacterized protein (601 aa).

Belongs to the chlamydial CPn_1016/CT_858/TC_0248 family.

This is an uncharacterized protein from Chlamydia muridarum (strain MoPn / Nigg).